Here is a 215-residue protein sequence, read N- to C-terminus: Probable peptidyl-prolyl cis-trans isomerase (215 aa).

In terms of domain architecture, PPIase cyclophilin-type spans 38 to 197; sequence DGIYAVMETN…RRGAAAKRFV (160 aa).

Belongs to the cyclophilin-type PPIase family.

The catalysed reaction is [protein]-peptidylproline (omega=180) = [protein]-peptidylproline (omega=0). Its function is as follows. PPIases accelerate the folding of proteins. It catalyzes the cis-trans isomerization of proline imidic peptide bonds in oligopeptides. The polypeptide is Probable peptidyl-prolyl cis-trans isomerase (ppiB) (Treponema pallidum (strain Nichols)).